A 565-amino-acid polypeptide reads, in one-letter code: Transmembrane 7 superfamily member 3 (565 aa).

A signal peptide spans 1–21 (MWRLRLLVLAVLAAGSAEAQA). N-linked (GlcNAc...) asparagine glycans are attached at residues Asn22, Asn56, Asn70, and Asn259. A run of 7 helical transmembrane segments spans residues 287–307 (VSTKVFSTLFALLGLFTCFFG), 311–331 (WKTELFFVGFIFLGFFFYILI), 341–361 (VRLVLTAVAGSIGGLLLVASW), 364–384 (FGILTLCMLCVGLVLGFLVSS), 402–422 (VFWVTFSCIALLVPVIFLGCL), 427–447 (ILACGIVGSYSVVLAINSYMF), and 478–498 (NDYIILAVWGMLAVTGITLQI).

Its subcellular location is the cell membrane. Involved in the inhibition of cytokine-induced death of pancreatic beta cells. Involved in the promotion of insulin secretion from pancreatic beta cells. Is a downstream transcriptional target of p53/TP53, and acts as a pro-survival homeostatic factor that attenuates the development of cellular stress. Maintains protein homeostasis and promotes cell survival through attenuation of endoplasmic reticulum (ER) stress and the subsequent induction of unfolded protein response (UPR). This is Transmembrane 7 superfamily member 3 (Tm7sf3) from Rattus norvegicus (Rat).